The following is a 92-amino-acid chain: RNA-binding protein Hfq (92 aa).

The Sm domain occupies 9–68 (DPFLNALRRERVPVSVYLVNGIKLQGTIESFDQFVVLLRNTVSQMVYKHAISTVVPARNV). Residues 72 to 92 (PGGGYVQSNENNQAEDDDVEQ) are disordered.

Belongs to the Hfq family. As to quaternary structure, homohexamer.

Its function is as follows. RNA chaperone that binds small regulatory RNA (sRNAs) and mRNAs to facilitate mRNA translational regulation in response to envelope stress, environmental stress and changes in metabolite concentrations. Also binds with high specificity to tRNAs. The protein is RNA-binding protein Hfq of Xanthomonas campestris pv. campestris (strain 8004).